The primary structure comprises 908 residues: Disease resistance protein RPP8 (908 aa).

Residues 15 to 57 (DLLSRESERLQGIDGQLDGLKRQLRSLQSLLKDADAKKHGSDR) adopt a coiled-coil conformation. An NB-ARC domain is found at 146-459 (RQRVQREIRQ…AEGIYDGSTI (314 aa)). Position 192–199 (192–199 (GMGGIGKT)) interacts with ATP. LRR repeat units follow at residues 575-600 (LTLL…IGGL), 601-623 (IHLR…MRNL), 648-673 (MIQL…DLVN), 693-718 (MTKL…SLRE), 722-746 (LETL…VLDH), 748-770 (IHLK…QFPP), 793-820 (LLHL…GFPQ), 842-867 (MPCL…KYIT), and 882-905 (KEKL…QFIN).

This sequence belongs to the disease resistance NB-LRR family. RPP8/HRT subfamily. Interacts with the NAC protein TIP. Interacts with MORC1/CRT1. Interacts with COP1 and is subsequently degraded in a 26s proteasome dependent manner. Mostly expressed in leaves, and, to a lower extent, in roots.

Its subcellular location is the cell membrane. Functionally, disease resistance protein. Resistance proteins guard the plant against pathogens that contain an appropriate avirulence protein via an indirect interaction with this avirulence protein. That triggers a defense system including the hypersensitive response, which restricts the pathogen growth. The interaction with TIP (TCV-interacting protein) may be essential for the recognition of the avirulence proteins, and the triggering of the defense response. Triggers resistance to turnip crinkle virus (TCV) via a SAG101-dependent pathway. The polypeptide is Disease resistance protein RPP8 (RPP8) (Arabidopsis thaliana (Mouse-ear cress)).